We begin with the raw amino-acid sequence, 441 residues long: Ribulose bisphosphate carboxylase/oxygenase activase, chloroplastic (441 aa).

167–174 (VWGGKGQG) contacts ATP.

Belongs to the RuBisCO activase family.

It is found in the plastid. The protein resides in the chloroplast stroma. Activation of RuBisCO (ribulose-1,5-bisphosphate carboxylase/oxygenase; EC 4.1.1.39) involves the ATP-dependent carboxylation of the epsilon-amino group of lysine leading to a carbamate structure. This is Ribulose bisphosphate carboxylase/oxygenase activase, chloroplastic (RCA1) from Phaseolus vulgaris (Kidney bean).